A 367-amino-acid chain; its full sequence is Glutamate 5-kinase (367 aa).

Position 10 (Lys10) interacts with ATP. Residues Ser50, Asp137, and Asn149 each contribute to the substrate site. ATP contacts are provided by residues 169–170 (TD) and 211–217 (TGGMATK). One can recognise a PUA domain in the interval 275–353 (AGVIIVDNGA…QEISQILGYE (79 aa)).

This sequence belongs to the glutamate 5-kinase family.

It localises to the cytoplasm. The catalysed reaction is L-glutamate + ATP = L-glutamyl 5-phosphate + ADP. It participates in amino-acid biosynthesis; L-proline biosynthesis; L-glutamate 5-semialdehyde from L-glutamate: step 1/2. Functionally, catalyzes the transfer of a phosphate group to glutamate to form L-glutamate 5-phosphate. In Proteus mirabilis (strain HI4320), this protein is Glutamate 5-kinase.